The chain runs to 420 residues: Imidazolonepropionase (420 aa).

Fe(3+) is bound by residues His77 and His79. Positions 77 and 79 each coordinate Zn(2+). Residues Arg86, Tyr149, and His182 each contribute to the 4-imidazolone-5-propanoate site. N-formimidoyl-L-glutamate is bound at residue Tyr149. A Fe(3+)-binding site is contributed by His245. His245 lines the Zn(2+) pocket. Glu248 lines the 4-imidazolone-5-propanoate pocket. Fe(3+) is bound at residue Asp319. Asp319 lines the Zn(2+) pocket. Asn321 lines the N-formimidoyl-L-glutamate pocket.

The protein belongs to the metallo-dependent hydrolases superfamily. HutI family. Zn(2+) is required as a cofactor. It depends on Fe(3+) as a cofactor.

The protein localises to the cytoplasm. It carries out the reaction 4-imidazolone-5-propanoate + H2O = N-formimidoyl-L-glutamate. It functions in the pathway amino-acid degradation; L-histidine degradation into L-glutamate; N-formimidoyl-L-glutamate from L-histidine: step 3/3. Catalyzes the hydrolytic cleavage of the carbon-nitrogen bond in imidazolone-5-propanoate to yield N-formimidoyl-L-glutamate. It is the third step in the universal histidine degradation pathway. The protein is Imidazolonepropionase of Haloarcula marismortui (strain ATCC 43049 / DSM 3752 / JCM 8966 / VKM B-1809) (Halobacterium marismortui).